The chain runs to 173 residues: Nicotinamide-nucleotide adenylyltransferase (173 aa).

The protein belongs to the archaeal NMN adenylyltransferase family.

Its subcellular location is the cytoplasm. The enzyme catalyses beta-nicotinamide D-ribonucleotide + ATP + H(+) = diphosphate + NAD(+). Its pathway is cofactor biosynthesis; NAD(+) biosynthesis; NAD(+) from nicotinamide D-ribonucleotide: step 1/1. This is Nicotinamide-nucleotide adenylyltransferase from Methanosarcina barkeri (strain Fusaro / DSM 804).